Reading from the N-terminus, the 229-residue chain is Mannose-specific lectin TAR1 (229 aa).

An N-terminal signal peptide occupies residues 1–23; that stretch reads MAKLLLFLLPAILGLLIPRSAVA. 2 Bulb-type lectin domains span residues 26–131 and 145–229; these read TNYL…PWVP and DNLL…DYVL. Beta-D-mannose is bound by residues 51–55, Tyr-59, Trp-63, Gln-64, 170–174, Tyr-178, and 182–185; these read QNDCN, QGDCN, and YGWQ. Residues 51 to 59 carry the Carbohydrate-binding motif 1 motif; sequence QNDCNLVLY. Cystine bridges form between Cys-54–Cys-74 and Cys-173–Cys-195. A Carbohydrate-binding motif 2 motif is present at residues 170–178; it reads QGDCNLVLY.

Forms heterotetramer of 2 chains 1 and 2 chains 2 arranged as a dimer of chain 1 and chain 2 heterodimers.

The protein resides in the secreted. Functionally, mannose-specific lectin. Shows agglutinating activity towards erythrocytes from rabbit. The sequence is that of Mannose-specific lectin TAR1 from Colocasia esculenta (Wild taro).